We begin with the raw amino-acid sequence, 601 residues long: Glutathione-regulated potassium-efflux system protein KefB (601 aa).

A run of 13 helical transmembrane segments spans residues 4–24 (SDLL…VPLA), 29–49 (IGAV…GLGF), 55–75 (EILH…GLEL), 87–107 (IFGV…GLLM), 115–135 (AAVV…LQLM), 152–172 (VLLF…LLAG), 177–197 (HVNW…LIGG), 207–227 (FIAS…LVLG), 230–250 (LFME…GVLL), 268–288 (GLLL…GVLY), 291–311 (LLWV…VLYL), 326–346 (FAGV…LPAS), and 356–376 (ALLL…MKGI). The RCK N-terminal domain occupies 400–519 (KPQVIIVGFG…AGVTQFSRET (120 aa)).

This sequence belongs to the monovalent cation:proton antiporter 2 (CPA2) transporter (TC 2.A.37) family. KefB subfamily. As to quaternary structure, interacts with the regulatory subunit KefG.

Its subcellular location is the cell inner membrane. Pore-forming subunit of a potassium efflux system that confers protection against electrophiles. Catalyzes K(+)/H(+) antiport. This is Glutathione-regulated potassium-efflux system protein KefB from Klebsiella pneumoniae subsp. pneumoniae (strain ATCC 700721 / MGH 78578).